The sequence spans 346 residues: MEEKYLPELMAEKDSLDPSFTHALRLVNREIEKFQKGEGKEEEKYIDVVINKNMKLGQKVLIPVKQFPKFNFVGKLLGPRGNSLKRLQEETLTKMSILGKGSMRDKAKEEELRKSGEAKYFHLNDDLHVLIEVFAPPAEAYARMGHALEEIKKFLIPDYNDEIRQAQLQELTYLNGGSENADVPVVRGKSTLRTRGVTTPAITRGRGGVTARPVAVGVPRGTPTPRGVLSTRGPVSRGRGLLTPRARGVPPTGYRPPPPPPTQETYGEYDYDDGYGTAYDEQSYDSYDNSYSTPAQSAADYYDYGHGLSEDAYDSYGQEEWTNSRHKAPSARTAKGVYRDQPYGRY.

The involved in homodimerization stretch occupies residues 1-160; it reads MEEKYLPELM…IKKFLIPDYN (160 aa). K4 is covalently cross-linked (Glycyl lysine isopeptide (Lys-Gly) (interchain with G-Cter in SUMO2)). In terms of domain architecture, KH spans 61 to 127; sequence LIPVKQFPKF…AKYFHLNDDL (67 aa). 2 disordered regions span residues 212 to 266 and 317 to 346; these read RPVA…QETY and GQEE…YGRY. Pro residues predominate over residues 253–262; that stretch reads GYRPPPPPPT.

Belongs to the KHDRBS family. Self-associates to form homooligomers; dimerization increases RNA affinity. Interacts with KHDRBS2/SLM-1. Interacts with KHDRBS1/SAM68; heterooligomer formation of KHDRBS family proteins may modulate RNA substrate specificity. Interacts with the splicing regulatory proteins SFRS9, SAFB and YTHDC1. Interacts with HNRPL, RBMX, p85 subunit of PI3-kinase, SERPINB5. Phosphorylated on tyrosine residues by PTK6. Highly expressed in testis and brain. In adult cerebellum expressed predominantly in internal granular layer interneurons and in hippocampus is exclusively expressed in CA neurons; expression is restricted to neuronal subpopulations largely non-overlapping with expression of KHDRBS2/SLM-1.

It is found in the nucleus. RNA-binding protein that plays a role in the regulation of alternative splicing and influences mRNA splice site selection and exon inclusion. Binds preferentially to the 5'-[AU]UAAA-3' motif in vitro. Binds optimally to RNA containing 5'-[AU]UAA-3' as a bipartite motif spaced by more than 15 nucleotides. Binds poly(A). RNA-binding abilities are down-regulated by tyrosine kinase PTK6. Involved in splice site selection of vascular endothelial growth factor. In vitro regulates CD44 alternative splicing by direct binding to purine-rich exonic enhancer. Can regulate alternative splicing of neurexins NRXN1-3 in the laminin G-like domain 6 containing the evolutionary conserved neurexin alternative spliced segment 4 (AS4) involved in neurexin selective targeting to postsynaptic partners such as neuroligins and LRRTM family members. High concentrations in forebrain structures block splicing inclusion of NRXN1-3 AS4 exons while low concentrations favor their inclusion. Targeted, cell-type specific splicing regulation of NRXN1 at AS4 is involved in neuronal glutamatergic synapse function and plasticity and is linked to behavioral aspects. Regulates expression of KHDRBS2/SLIM-1 in defined neuron populations in the hippocampus by modifying its alternative splicing resulting in a transcript predicted to undergo nonsense-mediated decay. Can bind FABP9 mRNA. May play a role as a negative regulator of cell growth. Inhibits cell proliferation. The chain is KH domain-containing, RNA-binding, signal transduction-associated protein 3 (Khdrbs3) from Mus musculus (Mouse).